The chain runs to 181 residues: Neuroblastoma suppressor of tumorigenicity 1 (181 aa).

Positions 1–16 (MMLRVLVGAVLPAMLL) are cleaved as a signal peptide. 5 disulfides stabilise this stretch: cysteine 35-cysteine 85, cysteine 49-cysteine 99, cysteine 59-cysteine 118, cysteine 63-cysteine 120, and cysteine 82-cysteine 123. One can recognise a CTCK domain in the interval 35–124 (CEAKNITQIV…ILHCSCQACG (90 aa)). Positions 132–181 (LSVYVQGEDGPGSQPGTHPHPHPHPHPGGQTPEPEDPPGAPHTEEEGAED) are disordered.

Belongs to the DAN family. Homodimer. As to expression, most abundant in normal lung and meningioma.

Its subcellular location is the secreted. In terms of biological role, possible candidate as a tumor suppressor gene of neuroblastoma. May play an important role in preventing cells from entering the final stage (G1/S) of the transformation process. The polypeptide is Neuroblastoma suppressor of tumorigenicity 1 (NBL1) (Homo sapiens (Human)).